We begin with the raw amino-acid sequence, 381 residues long: MSRHEGVSCDACLKGNFRGRRYKCLICYDYDLCASCYESGATTTRHTTDHPMQCILTRVDFDLYYGGEAFSVEQPQSFTCPYCGKMGYTETSLQEHVTSEHAETSTEVICPICAALPGGDPNHVTDDFAAHLTLEHRAPRDLDESSGVRHVRRMFHPGRGLGGPRARRSNMHFTSSSTGGLSSSQSSYSPSNREAMDPIAELLSQLSGVRRSAGGQLNSSGPSASQLQQLQMQLQLERQHAQAARQQLETARNATRRTNTSSVTTTITQSTATTNTANTESSQQTIQNSQFLLTRLNDPKMSETERQSMESERADRSLFVQELLLSTLVREESSSSDEDERGEMADFGAMGCVDIMPLDVALENLNLKESNKGNEPPPPPL.

S2 carries the N-acetylserine modification. S2 bears the Phosphoserine mark. Residues 4–60 form a ZZ-type zinc finger; sequence HEGVSCDACLKGNFRGRRYKCLICYDYDLCASCYESGATTTRHTTDHPMQCILTRVD. Zn(2+) is bound by residues C9, C12, C24, C27, C33, C36, H46, and H50. Residues 78–101 form a C2H2-type zinc finger; the sequence is FTCPYCGKMGYTETSLQEHVTSEH. Residues 154 to 193 are disordered; it reads MFHPGRGLGGPRARRSNMHFTSSSTGGLSSSQSSYSPSNR. S169, S189, and S212 each carry phosphoserine. Residues 175 to 191 show a composition bias toward low complexity; that stretch reads SSSTGGLSSSQSSYSPS. A coiled-coil region spans residues 224–257; the sequence is ASQLQQLQMQLQLERQHAQAARQQLETARNATRR. Low complexity predominate over residues 250–285; it reads TARNATRRTNTSSVTTTITQSTATTNTANTESSQQT. 2 disordered regions span residues 250 to 314 and 329 to 348; these read TARN…SERA and VREE…ADFG. A compositionally biased stretch (basic and acidic residues) spans 297 to 314; the sequence is NDPKMSETERQSMESERA. 2 positions are modified to phosphoserine: S335 and S336.

This sequence belongs to the KCMF1 family. As to quaternary structure, component of the SIFI complex, composed of KCMF1, UBR4 and calmodulin (CALM1, CALM2 or CALM3).

The protein resides in the cytoplasm. It localises to the late endosome. It is found in the lysosome. It carries out the reaction S-ubiquitinyl-[E2 ubiquitin-conjugating enzyme]-L-cysteine + [acceptor protein]-L-lysine = [E2 ubiquitin-conjugating enzyme]-L-cysteine + N(6)-ubiquitinyl-[acceptor protein]-L-lysine.. It participates in protein modification; protein ubiquitination. Functionally, E3 ubiquitin-protein ligase which accepts ubiquitin from an E2 ubiquitin-conjugating enzyme and then transfers it to targeted substrates, promoting their degradation by the proteasome. Together with UBR4, component of the N-end rule pathway: ubiquitinates proteins bearing specific N-terminal residues that are destabilizing according to the N-end rule, leading to their degradation. Does not ubiquitinate proteins that are acetylated at the N-terminus. Together with UBR4, part of a protein quality control pathway that catalyzes ubiquitination and degradation of proteins that have been oxidized in response to reactive oxygen species (ROS): recognizes proteins with an Arg-CysO3(H) degron at the N-terminus, and mediates assembly of heterotypic 'Lys-63'-/'Lys-27'-linked branched ubiquitin chains on oxidized proteins, leading to their degradation by autophagy. Catalytic component of the SIFI complex, a multiprotein complex required to inhibit the mitochondrial stress response after a specific stress event has been resolved: ubiquitinates and degrades (1) components of the HRI-mediated signaling of the integrated stress response, such as DELE1 and EIF2AK1/HRI, as well as (2) unimported mitochondrial precursors. Within the SIFI complex, UBR4 initiates ubiquitin chain that are further elongated or branched by KCMF1. This Bos taurus (Bovine) protein is E3 ubiquitin-protein ligase KCMF1 (KCMF1).